Here is a 156-residue protein sequence, read N- to C-terminus: Small ribosomal subunit protein uS7 (156 aa).

It belongs to the universal ribosomal protein uS7 family. Part of the 30S ribosomal subunit. Contacts proteins S9 and S11.

One of the primary rRNA binding proteins, it binds directly to 16S rRNA where it nucleates assembly of the head domain of the 30S subunit. Is located at the subunit interface close to the decoding center, probably blocks exit of the E-site tRNA. This chain is Small ribosomal subunit protein uS7, found in Nitrosococcus oceani (strain ATCC 19707 / BCRC 17464 / JCM 30415 / NCIMB 11848 / C-107).